We begin with the raw amino-acid sequence, 377 residues long: Probable pectin lyase D (377 aa).

Residues 1-17 (MRVSAFALLAAAATAAA) form the signal peptide. 2 disulfide bridges follow: C80–C99 and C89–C223. N-linked (GlcNAc...) asparagine glycosylation occurs at N126. R253 is an active-site residue. C321 and C329 are joined by a disulfide.

This sequence belongs to the polysaccharide lyase 1 family.

The protein localises to the secreted. The catalysed reaction is Eliminative cleavage of (1-&gt;4)-alpha-D-galacturonan methyl ester to give oligosaccharides with 4-deoxy-6-O-methyl-alpha-D-galact-4-enuronosyl groups at their non-reducing ends.. Its function is as follows. Pectinolytic enzymes consist of four classes of enzymes: pectin lyase, polygalacturonase, pectin methylesterase and rhamnogalacturonase. Among pectinolytic enzymes, pectin lyase is the most important in depolymerization of pectin, since it cleaves internal glycosidic bonds of highly methylated pectins. The sequence is that of Probable pectin lyase D (pelD) from Emericella nidulans (strain FGSC A4 / ATCC 38163 / CBS 112.46 / NRRL 194 / M139) (Aspergillus nidulans).